A 229-amino-acid chain; its full sequence is Putative N-acetylmannosamine-6-phosphate 2-epimerase (229 aa).

Belongs to the NanE family.

It carries out the reaction an N-acyl-D-glucosamine 6-phosphate = an N-acyl-D-mannosamine 6-phosphate. Its pathway is amino-sugar metabolism; N-acetylneuraminate degradation; D-fructose 6-phosphate from N-acetylneuraminate: step 3/5. In terms of biological role, converts N-acetylmannosamine-6-phosphate (ManNAc-6-P) to N-acetylglucosamine-6-phosphate (GlcNAc-6-P). This Escherichia coli O139:H28 (strain E24377A / ETEC) protein is Putative N-acetylmannosamine-6-phosphate 2-epimerase.